The following is a 234-amino-acid chain: Isoprenyl transferase (234 aa).

Residue Asp13 is part of the active site. Asp13 is a binding site for Mg(2+). Residues Gly14 to Arg17, Trp18, Arg26, His30, and Ser58 to Glu60 each bind substrate. The active-site Proton acceptor is the Asn61. Substrate contacts are provided by residues Trp62, Arg64, Arg180, and Arg186–Ser188. Glu199 serves as a coordination point for Mg(2+).

This sequence belongs to the UPP synthase family. As to quaternary structure, homodimer. Requires Mg(2+) as cofactor.

Its function is as follows. Catalyzes the condensation of isopentenyl diphosphate (IPP) with allylic pyrophosphates generating different type of terpenoids. In Helicobacter pylori (strain J99 / ATCC 700824) (Campylobacter pylori J99), this protein is Isoprenyl transferase.